The sequence spans 237 residues: Pyridoxine 5'-phosphate synthase (237 aa).

3-amino-2-oxopropyl phosphate is bound by residues Asn-7 and Arg-18. The active-site Proton acceptor is the His-43. 2 residues coordinate 1-deoxy-D-xylulose 5-phosphate: Arg-45 and His-50. The Proton acceptor role is filled by Glu-70. Thr-100 contributes to the 1-deoxy-D-xylulose 5-phosphate binding site. The active-site Proton donor is His-190. Residues Asp-191 and 213–214 (GH) contribute to the 3-amino-2-oxopropyl phosphate site.

This sequence belongs to the PNP synthase family. As to quaternary structure, homooctamer; tetramer of dimers.

It is found in the cytoplasm. The enzyme catalyses 3-amino-2-oxopropyl phosphate + 1-deoxy-D-xylulose 5-phosphate = pyridoxine 5'-phosphate + phosphate + 2 H2O + H(+). It functions in the pathway cofactor biosynthesis; pyridoxine 5'-phosphate biosynthesis; pyridoxine 5'-phosphate from D-erythrose 4-phosphate: step 5/5. Functionally, catalyzes the complicated ring closure reaction between the two acyclic compounds 1-deoxy-D-xylulose-5-phosphate (DXP) and 3-amino-2-oxopropyl phosphate (1-amino-acetone-3-phosphate or AAP) to form pyridoxine 5'-phosphate (PNP) and inorganic phosphate. This is Pyridoxine 5'-phosphate synthase from Flavobacterium johnsoniae (strain ATCC 17061 / DSM 2064 / JCM 8514 / BCRC 14874 / CCUG 350202 / NBRC 14942 / NCIMB 11054 / UW101) (Cytophaga johnsonae).